The following is a 163-amino-acid chain: Small ribosomal subunit protein uS5 (163 aa).

Positions 8 to 71 constitute an S5 DRBM domain; that stretch reads LVEKIVYLNR…ERAKKDMVQI (64 aa).

Belongs to the universal ribosomal protein uS5 family. Part of the 30S ribosomal subunit. Contacts proteins S4 and S8.

In terms of biological role, with S4 and S12 plays an important role in translational accuracy. Located at the back of the 30S subunit body where it stabilizes the conformation of the head with respect to the body. The polypeptide is Small ribosomal subunit protein uS5 (Nitratidesulfovibrio vulgaris (strain DSM 19637 / Miyazaki F) (Desulfovibrio vulgaris)).